We begin with the raw amino-acid sequence, 132 residues long: Small ribosomal subunit protein uS8 (132 aa).

This sequence belongs to the universal ribosomal protein uS8 family. Part of the 30S ribosomal subunit. Contacts proteins S5 and S12.

One of the primary rRNA binding proteins, it binds directly to 16S rRNA central domain where it helps coordinate assembly of the platform of the 30S subunit. In Beijerinckia indica subsp. indica (strain ATCC 9039 / DSM 1715 / NCIMB 8712), this protein is Small ribosomal subunit protein uS8.